We begin with the raw amino-acid sequence, 767 residues long: E3 ubiquitin-protein ligase pub1 (767 aa).

Residues 1 to 111 enclose the C2 domain; the sequence is MSNSAQSRRI…AIGGDEMLTR (111 aa). Positions 138-158 are enriched in polar residues; that stretch reads LQVPSSAASGARTQRTSITND. Disordered stretches follow at residues 138–216 and 252–306; these read LQVP…RRTD and SASS…RPYF. Phosphothreonine is present on threonine 156. A compositionally biased stretch (low complexity) spans 159–176; that stretch reads PQSSQSSSVSRNPASSRA. The residue at position 178 (serine 178) is a Phosphoserine. The residue at position 180 (threonine 180) is a Phosphothreonine. Residues 184-194 show a composition bias toward low complexity; that stretch reads APAASPASSEP. Residues 211-236 form the WW 1 domain; sequence WERRTDNLGRTYYVDHNTRSTTWIRP. A compositionally biased stretch (polar residues) spans 257–286; sequence NVTEGVQPSSSNAARRTEASVLTSNATTAG. 2 WW domains span residues 294–319 and 351–376; these read WEQR…WVDP and WEMR…WDDP. An HECT domain is found at 463–767; the sequence is FLLSHEMFNP…VEETIGFGQE (305 aa). Residue cysteine 735 is the Glycyl thioester intermediate of the active site.

It localises to the membrane. Its subcellular location is the cytoplasm. The enzyme catalyses S-ubiquitinyl-[E2 ubiquitin-conjugating enzyme]-L-cysteine + [acceptor protein]-L-lysine = [E2 ubiquitin-conjugating enzyme]-L-cysteine + N(6)-ubiquitinyl-[acceptor protein]-L-lysine.. The protein operates within protein modification; protein ubiquitination. Functionally, E3 ubiquitin-protein ligase which accepts ubiquitin from an E2 ubiquitin-conjugating enzyme in the form of a thioester and then directly transfers the ubiquitin to targeted substrates. Regulates ubiquitination of cdc25. This chain is E3 ubiquitin-protein ligase pub1 (pub1), found in Schizosaccharomyces pombe (strain 972 / ATCC 24843) (Fission yeast).